The primary structure comprises 275 residues: Bis(5'-nucleosyl)-tetraphosphatase, symmetrical (275 aa).

It belongs to the Ap4A hydrolase family.

It carries out the reaction P(1),P(4)-bis(5'-adenosyl) tetraphosphate + H2O = 2 ADP + 2 H(+). Functionally, hydrolyzes diadenosine 5',5'''-P1,P4-tetraphosphate to yield ADP. This is Bis(5'-nucleosyl)-tetraphosphatase, symmetrical from Nitrosospira multiformis (strain ATCC 25196 / NCIMB 11849 / C 71).